Here is a 196-residue protein sequence, read N- to C-terminus: Endoribonuclease YbeY (196 aa).

3 residues coordinate Zn(2+): histidine 120, histidine 124, and histidine 130.

The protein belongs to the endoribonuclease YbeY family. Requires Zn(2+) as cofactor.

It localises to the cytoplasm. Functionally, single strand-specific metallo-endoribonuclease involved in late-stage 70S ribosome quality control and in maturation of the 3' terminus of the 16S rRNA. The sequence is that of Endoribonuclease YbeY from Corynebacterium glutamicum (strain ATCC 13032 / DSM 20300 / JCM 1318 / BCRC 11384 / CCUG 27702 / LMG 3730 / NBRC 12168 / NCIMB 10025 / NRRL B-2784 / 534).